Reading from the N-terminus, the 257-residue chain is 3-deoxy-manno-octulosonate cytidylyltransferase (257 aa).

Belongs to the KdsB family.

The protein localises to the cytoplasm. It catalyses the reaction 3-deoxy-alpha-D-manno-oct-2-ulosonate + CTP = CMP-3-deoxy-beta-D-manno-octulosonate + diphosphate. The protein operates within nucleotide-sugar biosynthesis; CMP-3-deoxy-D-manno-octulosonate biosynthesis; CMP-3-deoxy-D-manno-octulosonate from 3-deoxy-D-manno-octulosonate and CTP: step 1/1. It functions in the pathway bacterial outer membrane biogenesis; lipopolysaccharide biosynthesis. Functionally, activates KDO (a required 8-carbon sugar) for incorporation into bacterial lipopolysaccharide in Gram-negative bacteria. The sequence is that of 3-deoxy-manno-octulosonate cytidylyltransferase from Rhodospirillum centenum (strain ATCC 51521 / SW).